The primary structure comprises 95 residues: Aspartyl/glutamyl-tRNA(Asn/Gln) amidotransferase subunit C (95 aa).

It belongs to the GatC family. As to quaternary structure, heterotrimer of A, B and C subunits.

It carries out the reaction L-glutamyl-tRNA(Gln) + L-glutamine + ATP + H2O = L-glutaminyl-tRNA(Gln) + L-glutamate + ADP + phosphate + H(+). The enzyme catalyses L-aspartyl-tRNA(Asn) + L-glutamine + ATP + H2O = L-asparaginyl-tRNA(Asn) + L-glutamate + ADP + phosphate + 2 H(+). Allows the formation of correctly charged Asn-tRNA(Asn) or Gln-tRNA(Gln) through the transamidation of misacylated Asp-tRNA(Asn) or Glu-tRNA(Gln) in organisms which lack either or both of asparaginyl-tRNA or glutaminyl-tRNA synthetases. The reaction takes place in the presence of glutamine and ATP through an activated phospho-Asp-tRNA(Asn) or phospho-Glu-tRNA(Gln). The chain is Aspartyl/glutamyl-tRNA(Asn/Gln) amidotransferase subunit C from Nitrosomonas europaea (strain ATCC 19718 / CIP 103999 / KCTC 2705 / NBRC 14298).